The chain runs to 249 residues: Triosephosphate isomerase (249 aa).

9 to 11 (NWK) serves as a coordination point for substrate. H95 functions as the Electrophile in the catalytic mechanism. Residue E166 is the Proton acceptor of the active site. Residues G172, S211, and 232–233 (GG) each bind substrate.

The protein belongs to the triosephosphate isomerase family. In terms of assembly, homodimer.

The protein localises to the cytoplasm. The enzyme catalyses D-glyceraldehyde 3-phosphate = dihydroxyacetone phosphate. The protein operates within carbohydrate biosynthesis; gluconeogenesis. Its pathway is carbohydrate degradation; glycolysis; D-glyceraldehyde 3-phosphate from glycerone phosphate: step 1/1. Its function is as follows. Involved in the gluconeogenesis. Catalyzes stereospecifically the conversion of dihydroxyacetone phosphate (DHAP) to D-glyceraldehyde-3-phosphate (G3P). This chain is Triosephosphate isomerase, found in Legionella pneumophila (strain Lens).